Consider the following 89-residue polypeptide: Submaxillary mucin (89 aa).

A disordered region spans residues 1-89; it reads AGSVGRTAGG…VGGSPVATTL (89 aa). Ser3 carries an O-linked (GalNAc...) serine; partial glycan. O-linked (GalNAc...) threonine; partial glycosylation is found at Thr7 and Thr14. Ser15 is a glycosylation site (O-linked (GalNAc...) serine; partial). Thr23 carries an O-linked (GalNAc...) threonine; partial glycan. O-linked (GalNAc...) serine; partial glycosylation is present at Ser25. Residue Thr27 is glycosylated (O-linked (GalNAc...) threonine; partial). Ser29 carries an O-linked (GalNAc...) serine; partial glycan. Thr34 carries O-linked (GalNAc...) threonine; partial glycosylation. The O-linked (GalNAc...) serine; partial glycan is linked to Ser38. O-linked (GalNAc...) threonine; partial glycosylation is present at Thr42. Ser47 and Ser49 each carry an O-linked (GalNAc...) serine; partial glycan. Thr50 carries O-linked (GalNAc...) threonine; partial glycosylation. Ser54 carries O-linked (GalNAc...) serine; partial glycosylation. Residues 56-71 show a composition bias toward low complexity; sequence APGTTLAGRAGTTLGP. O-linked (GalNAc...) threonine; partial glycosylation is found at Thr59, Thr60, Thr67, and Thr68. O-linked (GalNAc...) serine; partial glycans are attached at residues Ser73 and Ser76. O-linked (GalNAc...) threonine; partial glycosylation occurs at Thr78. Ser83 carries O-linked (GalNAc...) serine; partial glycosylation.

Post-translationally, heavily O-glycosylated at most but not all Ser and Thr residues. Expressed in the submaxillary salivary gland.

It is found in the secreted. This is Submaxillary mucin from Canis lupus familiaris (Dog).